Reading from the N-terminus, the 696-residue chain is Glycine--tRNA ligase beta subunit (696 aa).

Belongs to the class-II aminoacyl-tRNA synthetase family. In terms of assembly, tetramer of two alpha and two beta subunits.

It is found in the cytoplasm. The enzyme catalyses tRNA(Gly) + glycine + ATP = glycyl-tRNA(Gly) + AMP + diphosphate. The sequence is that of Glycine--tRNA ligase beta subunit from Oleidesulfovibrio alaskensis (strain ATCC BAA-1058 / DSM 17464 / G20) (Desulfovibrio alaskensis).